The chain runs to 64 residues: Putative calcium channel toxin Tx758 (64 aa).

Positions 1–18 are cleaved as a signal peptide; that stretch reads MSTFVIVFLLLTAVLCHA. The propeptide occupies 19 to 27; the sequence is EPALDETAR. Cystine bridges form between Cys-29/Cys-43, Cys-36/Cys-49, and Cys-42/Cys-58.

The protein belongs to the scorpion calcin-like family. As to expression, expressed by the venom gland.

The protein localises to the secreted. In terms of biological role, may increase intracellular calcium release through the activation of nuclear inositol 1,4,5-trisphosphate receptors (ITPR) of cardiomyocytes, thereby causing an increase in the contraction frequency of these cells. The chain is Putative calcium channel toxin Tx758 from Buthus israelis (Israeli scorpion).